We begin with the raw amino-acid sequence, 396 residues long: Tyrosine--tRNA ligase (396 aa).

The 'HIGH' region motif lies at 43–52; it reads PSSPDIHLGH. The 'KMSKS' region signature appears at 227–231; sequence KMSKS. K230 contacts ATP. In terms of domain architecture, S4 RNA-binding spans 338-396; it reads TGVIDFIILSGLAKSKSEARRLLEQGAVEINSEKISDQNTPVKCGDIIKAGKRRYSKAI.

This sequence belongs to the class-I aminoacyl-tRNA synthetase family. TyrS type 2 subfamily. Homodimer.

Its subcellular location is the cytoplasm. The enzyme catalyses tRNA(Tyr) + L-tyrosine + ATP = L-tyrosyl-tRNA(Tyr) + AMP + diphosphate + H(+). In terms of biological role, catalyzes the attachment of tyrosine to tRNA(Tyr) in a two-step reaction: tyrosine is first activated by ATP to form Tyr-AMP and then transferred to the acceptor end of tRNA(Tyr). The sequence is that of Tyrosine--tRNA ligase from Dehalococcoides mccartyi (strain CBDB1).